Reading from the N-terminus, the 395-residue chain is Acid ceramidase (395 aa).

Positions 1-21 (MPGRSCVALVLLAAAVSCAVA) are cleaved as a signal peptide. A disulfide bridge connects residues cysteine 31 and cysteine 340. Catalysis depends on cysteine 143, which acts as the Nucleophile. N-linked (GlcNAc...) asparagine glycosylation is found at asparagine 173, asparagine 195, asparagine 259, asparagine 286, asparagine 342, and asparagine 348. Cysteine 388 and cysteine 392 are disulfide-bonded.

It belongs to the acid ceramidase family. Heterodimer; disulfide-linked. The heterodimer is composed of the disulfide-linked alpha and beta chains produced by autocatalytic cleavage of the precursor. Isoform 2: May interact with NR5A1 in the nucleus; the direct interaction would negatively regulate NR5A1 transcriptional activity. Post-translationally, N-glycosylated. Proteolytically cleaved into two chains alpha and beta that remain associated via a disulfide bond. Cleavage gives rise to a conformation change that activates the enzyme. The same catalytic Cys residue mediates the autoproteolytic cleavage and subsequent hydrolysis of lipid substrates. The beta chain may undergo an additional C-terminal processing. As to expression, broadly expressed with higher expression in heart.

It localises to the lysosome. The protein resides in the secreted. The protein localises to the nucleus. Its subcellular location is the cytoplasm. It catalyses the reaction an N-acylsphing-4-enine + H2O = sphing-4-enine + a fatty acid. The enzyme catalyses a beta-D-glucosyl-(1&lt;-&gt;1')-N-acylsphing-4-enine + H2O = beta-D-glucosyl-(1&lt;-&gt;1)-sphing-4-enine + a fatty acid. It carries out the reaction a globoside Gb3Cer + H2O = a lysoGb3 + a fatty acid. The catalysed reaction is a globoside Gb3Cer (d18:1(4E)) + H2O = a lysoGb3(d18:1(4E)) + a fatty acid. It catalyses the reaction N-dodecanoylsphing-4-enine + H2O = dodecanoate + sphing-4-enine. The enzyme catalyses N-tetradecanoylsphing-4-enine + H2O = tetradecanoate + sphing-4-enine. It carries out the reaction N-hexadecanoylsphing-4-enine + H2O = sphing-4-enine + hexadecanoate. The catalysed reaction is N-octadecanoylsphing-4-enine + H2O = sphing-4-enine + octadecanoate. It catalyses the reaction N-dodecanoyl-(4R)-hydroxysphinganine + H2O = (4R)-hydroxysphinganine + dodecanoate. The enzyme catalyses N-(dodecanoyl)-sphinganine + H2O = dodecanoate + sphinganine. It carries out the reaction N-(acetyl)-sphing-4-enine + H2O = sphing-4-enine + acetate. The catalysed reaction is N-(hexanoyl)sphing-4-enine + H2O = hexanoate + sphing-4-enine. It catalyses the reaction N-octanoylsphing-4-enine + H2O = octanoate + sphing-4-enine. The enzyme catalyses N-(9Z-octadecenoyl)-sphing-4-enine + H2O = sphing-4-enine + (9Z)-octadecenoate. It carries out the reaction N-dodecanoylethanolamine + H2O = dodecanoate + ethanolamine. Its pathway is lipid metabolism; sphingolipid metabolism. With respect to regulation, activated by Ca(2+), Mg(2+) and Na(+) cations. Inhibited by Zn(2+). Phosphatidylserine and phosphatidic acid stimulate while cardiolipin, phosphatidylcholine, lysophosphatidylcholine, phosphatidylethanolamine, phosphatidylinositol and sphingomyelin inhibit the reverse ceramide synthase activity. Phosphatidic acid, phosphatidylinositol and C16-ceramide inhibit the ceramidase/hydrolase activity. Lysosomal ceramidase that hydrolyzes sphingolipid ceramides into sphingosine and free fatty acids at acidic pH. Ceramides, sphingosine, and its phosphorylated form sphingosine-1-phosphate are bioactive lipids that mediate cellular signaling pathways regulating several biological processes including cell proliferation, apoptosis and differentiation. Has a higher catalytic efficiency towards C12-ceramides versus other ceramides. Also catalyzes the reverse reaction allowing the synthesis of ceramides from fatty acids and sphingosine. For the reverse synthetic reaction, the natural sphingosine D-erythro isomer is more efficiently utilized as a substrate compared to D-erythro-dihydrosphingosine and D-erythro-phytosphingosine, while the fatty acids with chain lengths of 12 or 14 carbons are the most efficiently used. Also has an N-acylethanolamine hydrolase activity. By regulating the levels of ceramides, sphingosine and sphingosine-1-phosphate in the epidermis, mediates the calcium-induced differentiation of epidermal keratinocytes. Also indirectly regulates tumor necrosis factor/TNF-induced apoptosis. By regulating the intracellular balance between ceramides and sphingosine, in adrenocortical cells, probably also acts as a regulator of steroidogenesis. In terms of biological role, may directly regulate steroidogenesis by binding the nuclear receptor NR5A1 and negatively regulating its transcriptional activity. In Homo sapiens (Human), this protein is Acid ceramidase.